The sequence spans 415 residues: CCA-adding enzyme (415 aa).

ATP is bound by residues serine 52 and arginine 55. CTP contacts are provided by serine 52 and arginine 55. Residues aspartate 64, aspartate 66, and aspartate 116 each coordinate Mg(2+). The ATP site is built by histidine 139, lysine 159, and tyrosine 168. CTP is bound by residues histidine 139, lysine 159, and tyrosine 168.

Belongs to the tRNA nucleotidyltransferase/poly(A) polymerase family. Archaeal CCA-adding enzyme subfamily. Homodimer. Requires Mg(2+) as cofactor.

The enzyme catalyses a tRNA precursor + 2 CTP + ATP = a tRNA with a 3' CCA end + 3 diphosphate. It carries out the reaction a tRNA with a 3' CCA end + 2 CTP + ATP = a tRNA with a 3' CCACCA end + 3 diphosphate. Its function is as follows. Catalyzes the addition and repair of the essential 3'-terminal CCA sequence in tRNAs without using a nucleic acid template. Adds these three nucleotides in the order of C, C, and A to the tRNA nucleotide-73, using CTP and ATP as substrates and producing inorganic pyrophosphate. tRNA 3'-terminal CCA addition is required both for tRNA processing and repair. Also involved in tRNA surveillance by mediating tandem CCA addition to generate a CCACCA at the 3' terminus of unstable tRNAs. While stable tRNAs receive only 3'-terminal CCA, unstable tRNAs are marked with CCACCA and rapidly degraded. The protein is CCA-adding enzyme of Pyrobaculum neutrophilum (strain DSM 2338 / JCM 9278 / NBRC 100436 / V24Sta) (Thermoproteus neutrophilus).